Consider the following 94-residue polypeptide: RING finger protein Z (94 aa).

Residues 1–22 (MGNCNKPPKRPPNTQTSAAQPS) are disordered. Residue Gly2 is the site of N-myristoyl glycine; by host attachment. The segment at 39–75 (CKCCWFADTNLITCNDHYLCLRCHQTMLRNSELCHIC) adopts an RING-type; atypical zinc-finger fold. The PTAP/PSAP motif motif lies at 89–92 (PSAP).

Belongs to the arenaviridae Z protein family. In terms of assembly, interacts with protein NP; this interaction probably directs the encapsidated genome to budding sites. Interacts (via RING domain) with polymerase L; this interaction inhibits viral transcription and replication, Z partially blocks the product exit tunnel for the releasing nascent RNA product. Interacts with the glycoprotein complex; this interaction plays a role in virion budding. Interacts with host eIF4E; this interaction results in eIF4E reduced affinity for its substrate, the 5'-m7 G cap structure. Interacts (via late-budding domain) with host TSG101; this interaction is essential for budding and release of viral particles. Interacts with host RPLP0; this interaction may serve to load ribosome-like particles inside the virion. Interacts with host PML; this interaction induces PML bodies redistribution in the cytoplasm upon viral infection. Post-translationally, myristoylation is required for the role of RING finger protein Z in assembly and budding.

It is found in the virion. The protein localises to the host cytoplasm. The protein resides in the host perinuclear region. It localises to the host cell membrane. Plays a crucial role in virion assembly and budding. Expressed late in the virus life cycle, it acts as an inhibitor of viral transcription and RNA synthesis by interacting with the viral polymerase L. Presumably recruits the NP encapsidated genome to cellular membranes at budding sites via direct interaction with NP. Plays critical roles in the final steps of viral release by interacting with host TSG101, a member of the vacuolar protein-sorting pathway and using other cellular host proteins involved in vesicle formation pathway. The budding of the virus progeny occurs after association of protein Z with the viral glycoprotein complex SSP-GP1-GP2 at the cell periphery, step that requires myristoylation of protein Z. Also selectively represses protein production by associating with host eIF4E. In cell-based minigenome assay, has an inhibitory effect on the ribonucleoprotein machinery (vRNP), which is responsible for the replication and transcription of the viral genome. The sequence is that of RING finger protein Z from Calomys callosus (Large vesper mouse).